A 440-amino-acid polypeptide reads, in one-letter code: Glutamyl-tRNA reductase (440 aa).

Substrate contacts are provided by residues 50–53 (TCNR), S109, 114–116 (EPQ), and Q120. C51 (nucleophile) is an active-site residue. 189 to 194 (GAGEMA) is an NADP(+) binding site.

The protein belongs to the glutamyl-tRNA reductase family. As to quaternary structure, homodimer.

It carries out the reaction (S)-4-amino-5-oxopentanoate + tRNA(Glu) + NADP(+) = L-glutamyl-tRNA(Glu) + NADPH + H(+). The protein operates within porphyrin-containing compound metabolism; protoporphyrin-IX biosynthesis; 5-aminolevulinate from L-glutamyl-tRNA(Glu): step 1/2. Its function is as follows. Catalyzes the NADPH-dependent reduction of glutamyl-tRNA(Glu) to glutamate 1-semialdehyde (GSA). The sequence is that of Glutamyl-tRNA reductase from Nitratidesulfovibrio vulgaris (strain DP4) (Desulfovibrio vulgaris).